We begin with the raw amino-acid sequence, 179 residues long: MEGEELIYHNIINEILVGYIKYYINDISEHELSPYQQQIKKILTYYDECLNKQVTITFSLTSVQEIKTQFTGVVTELFKDLINWGRICGFIVFSAKMAKYCKDANNHLESTVITTAYNFMKHNLLPWMISHGGQEEFLAFSLHSDMYSVIFNIKYFLSKFCNHMFFRSCVQLLRNCNLI.

The BH1 signature appears at 76–95; sequence ELFKDLINWGRICGFIVFSA. Positions 126-141 match the BH2 motif; that stretch reads PWMISHGGQEEFLAFS.

The protein belongs to the Bcl-2 family. Interacts with host BECN1 (via BH3 homology domain); this interaction allows the virus to inhibit BECN1, and thus autophagy. Interacts with host BID. Interacts with host BAX.

The protein localises to the host mitochondrion. The protein resides in the host endoplasmic reticulum. Functionally, suppresses apoptosis in host cell to promote the viral replication. Has the ability to potentially bind to all the members of the proapoptotic Bcl-2 family. Inhibits autophagy by interacting with host Beclin 1 (BECN1). The polypeptide is Apoptosis regulator Bcl-2 homolog (Ornithodoros (relapsing fever ticks)).